The chain runs to 1052 residues: Focal adhesion kinase 1 (1052 aa).

A disordered region spans residues 1-27; the sequence is MAAAYLDPNLNHTPNSSTKTHLGTGME. An N-acetylalanine modification is found at alanine 2. Tyrosine 5 is modified (phosphotyrosine). Residues 10–21 are compositionally biased toward polar residues; it reads LNHTPNSSTKTH. Threonine 13 bears the Phosphothreonine mark. A phosphoserine mark is found at serine 29 and serine 54. One can recognise an FERM domain in the interval 35 to 355; it reads RVLKVFHYFE…GYCRLVNGTS (321 aa). Lysine 152 is covalently cross-linked (Glycyl lysine isopeptide (Lys-Gly) (interchain with G-Cter in SUMO)). Tyrosine 397 carries the phosphotyrosine; by autocatalysis modification. Phosphotyrosine is present on tyrosine 407. One can recognise a Protein kinase domain in the interval 422 to 680; it reads IELGRCIGEG…ELKAQLSTIL (259 aa). ATP-binding positions include 428–434, lysine 454, and 500–502; these read IGEGQFG and ELC. The Proton acceptor role is filled by aspartate 546. At tyrosine 570 the chain carries Phosphotyrosine. A phosphotyrosine; by RET and SRC mark is found at tyrosine 576 and tyrosine 577. At serine 580 the chain carries Phosphoserine. Residues 684–697 show a composition bias toward basic and acidic residues; that stretch reads KAQQEERMRMESRR. 2 disordered regions span residues 684–734 and 839–922; these read KAQQ…PSPQ and LSRG…RSND. Residues 707-1052 form an interaction with TGFB1I1 region; the sequence is GSDEAPPKPS…LKMLGQTRPH (346 aa). Serine 722 carries the post-translational modification Phosphoserine. Serine 732 is subject to Phosphoserine; by CDK5. Basic and acidic residues predominate over residues 839 to 849; the sequence is LSRGSIDREDG. Residue serine 843 is modified to Phosphoserine. Tyrosine 861 is subject to Phosphotyrosine. Over residues 869-880 the composition is skewed to pro residues; sequence PAAPPKKPPRPG. A phosphoserine mark is found at serine 887 and serine 910. An interaction with ARHGEF28 region spans residues 912-1052; sequence PPTANLDRSN…LKMLGQTRPH (141 aa). Threonine 914 is subject to Phosphothreonine. Tyrosine 925 is modified (phosphotyrosine).

This sequence belongs to the protein kinase superfamily. Tyr protein kinase family. FAK subfamily. As to quaternary structure, interacts (via first Pro-rich region) with CAS family members (via SH3 domain), including BCAR1, BCAR3, and CASS4. Interacts with NEDD9 (via SH3 domain). Interacts with GIT1. Interacts with SORBS1. Interacts with ARHGEF28. Interacts with SHB. Part of a complex composed of THSD1, PTK2/FAK1, TLN1 and VCL. Interacts with PXN and TLN1. Interacts with STAT1. Interacts with DCC. Interacts with WASL. Interacts with ARHGEF7. Interacts with GRB2 and GRB7. Component of a complex that contains at least FER, CTTN and PTK2/FAK1. Interacts with BMX. Interacts with TGFB1I1. Interacts with STEAP4. Interacts with ZFYVE21. Interacts with ESR1. Interacts with PIK3R1 or PIK3R2. Interacts with SRC, FGR, FLT4 and RET. Interacts with EPHA2 in resting cells; activation of EPHA2 recruits PTPN11, leading to dephosphorylation of PTK2/FAK1 and dissociation of the complex. Interacts with EPHA1 (kinase activity-dependent). Interacts with CD4; this interaction requires the presence of HIV-1 gp120. Interacts with PIAS1. Interacts with ARHGAP26 and SHC1. Interacts with RB1CC1; this inhibits PTK2/FAK1 activity and activation of downstream signaling pathways. Interacts with P53/TP53 and MDM2. Interacts with LPXN (via LD motif 3). Interacts with MISP. Interacts with CIB1 isoform 2. Interacts with CD36. Interacts with EMP2; regulates PTK2 activation and localization. Interacts with DSCAM. Interacts with AMBRA1. Interacts (when tyrosine-phosphorylated) with tensin TNS1; the interaction is increased by phosphorylation of TNS1. In terms of processing, phosphorylated on tyrosine residues upon activation, e.g. upon integrin signaling. Tyr-397 is the major autophosphorylation site, but other kinases can also phosphorylate this residue. Phosphorylation at Tyr-397 promotes interaction with SRC and SRC family members, leading to phosphorylation at Tyr-576, Tyr-577 and at additional tyrosine residues. FGR promotes phosphorylation at Tyr-397 and Tyr-576. FER promotes phosphorylation at Tyr-577, Tyr-861 and Tyr-925, even when cells are not adherent. Tyr-397, Tyr-576 and Ser-722 are phosphorylated only when cells are adherent. Phosphorylation at Tyr-397 is important for interaction with BMX, PIK3R1 and SHC1. Phosphorylation at Tyr-925 is important for interaction with GRB2. Dephosphorylated by PTPN11; PTPN11 is recruited to PTK2 via EPHA2 (tyrosine phosphorylated). Microtubule-induced dephosphorylation at Tyr-397 is crucial for the induction of focal adhesion disassembly; this dephosphorylation could be catalyzed by PTPN11 and regulated by ZFYVE21. Phosphorylation on tyrosine residues is enhanced by NTN1. Post-translationally, sumoylated; this enhances autophosphorylation. As to expression, detected in B and T-lymphocytes. Isoform 1 and isoform 6 are detected in lung fibroblasts (at protein level). Ubiquitous. Expressed in epithelial cells (at protein level).

The protein resides in the cell junction. Its subcellular location is the focal adhesion. It is found in the cell membrane. It localises to the cytoplasm. The protein localises to the perinuclear region. The protein resides in the cell cortex. Its subcellular location is the cytoskeleton. It is found in the microtubule organizing center. It localises to the centrosome. The protein localises to the nucleus. The protein resides in the cilium basal body. It catalyses the reaction L-tyrosyl-[protein] + ATP = O-phospho-L-tyrosyl-[protein] + ADP + H(+). Subject to autoinhibition, mediated by interactions between the FERM domain and the kinase domain. Activated by autophosphorylation at Tyr-397. This promotes interaction with SRC and phosphorylation at Tyr-576 and Tyr-577 in the kinase activation loop. Phosphorylation at Tyr-576 and Tyr-577 is required for maximal kinase activity. Inhibited by TAC544, TAE226, PF-573,228 and PF-562,271. In terms of biological role, non-receptor protein-tyrosine kinase that plays an essential role in regulating cell migration, adhesion, spreading, reorganization of the actin cytoskeleton, formation and disassembly of focal adhesions and cell protrusions, cell cycle progression, cell proliferation and apoptosis. Required for early embryonic development and placenta development. Required for embryonic angiogenesis, normal cardiomyocyte migration and proliferation, and normal heart development. Regulates axon growth and neuronal cell migration, axon branching and synapse formation; required for normal development of the nervous system. Plays a role in osteogenesis and differentiation of osteoblasts. Functions in integrin signal transduction, but also in signaling downstream of numerous growth factor receptors, G-protein coupled receptors (GPCR), EPHA2, netrin receptors and LDL receptors. Forms multisubunit signaling complexes with SRC and SRC family members upon activation; this leads to the phosphorylation of additional tyrosine residues, creating binding sites for scaffold proteins, effectors and substrates. Regulates numerous signaling pathways. Promotes activation of phosphatidylinositol 3-kinase and the AKT1 signaling cascade. Promotes activation of MAPK1/ERK2, MAPK3/ERK1 and the MAP kinase signaling cascade. Promotes localized and transient activation of guanine nucleotide exchange factors (GEFs) and GTPase-activating proteins (GAPs), and thereby modulates the activity of Rho family GTPases. Signaling via CAS family members mediates activation of RAC1. Phosphorylates NEDD9 following integrin stimulation. Recruits the ubiquitin ligase MDM2 to P53/TP53 in the nucleus, and thereby regulates P53/TP53 activity, P53/TP53 ubiquitination and proteasomal degradation. Phosphorylates SRC; this increases SRC kinase activity. Phosphorylates ACTN1, ARHGEF7, GRB7, RET and WASL. Promotes phosphorylation of PXN and STAT1; most likely PXN and STAT1 are phosphorylated by a SRC family kinase that is recruited to autophosphorylated PTK2/FAK1, rather than by PTK2/FAK1 itself. Promotes phosphorylation of BCAR1; GIT2 and SHC1; this requires both SRC and PTK2/FAK1. Promotes phosphorylation of BMX and PIK3R1. Isoform 6 (FRNK) does not contain a kinase domain and inhibits PTK2/FAK1 phosphorylation and signaling. Its enhanced expression can attenuate the nuclear accumulation of LPXN and limit its ability to enhance serum response factor (SRF)-dependent gene transcription. Isoform 6 (FRNK) does not contain a kinase domain and inhibits PTK2/FAK1 phosphorylation and signaling. Its enhanced expression can attenuate the nuclear accumulation of LPXN and limit its ability to enhance serum response factor (SRF)-dependent gene transcription. In Homo sapiens (Human), this protein is Focal adhesion kinase 1.